A 66-amino-acid chain; its full sequence is Large ribosomal subunit protein bL33c (66 aa).

Belongs to the bacterial ribosomal protein bL33 family.

The protein resides in the plastid. The protein localises to the chloroplast. In Angiopteris evecta (Mule's foot fern), this protein is Large ribosomal subunit protein bL33c.